Consider the following 312-residue polypeptide: Ribose-phosphate pyrophosphokinase (312 aa).

Residues 34 to 36 and 93 to 94 contribute to the ATP site; these read DQE and RQ. H127 and D167 together coordinate Mg(2+). K191 is an active-site residue. Residues R193, D217, and 221–225 each bind D-ribose 5-phosphate; that span reads DSGGT.

It belongs to the ribose-phosphate pyrophosphokinase family. Class I subfamily. Homohexamer. The cofactor is Mg(2+).

The protein localises to the cytoplasm. The enzyme catalyses D-ribose 5-phosphate + ATP = 5-phospho-alpha-D-ribose 1-diphosphate + AMP + H(+). Its pathway is metabolic intermediate biosynthesis; 5-phospho-alpha-D-ribose 1-diphosphate biosynthesis; 5-phospho-alpha-D-ribose 1-diphosphate from D-ribose 5-phosphate (route I): step 1/1. Its function is as follows. Involved in the biosynthesis of the central metabolite phospho-alpha-D-ribosyl-1-pyrophosphate (PRPP) via the transfer of pyrophosphoryl group from ATP to 1-hydroxyl of ribose-5-phosphate (Rib-5-P). The protein is Ribose-phosphate pyrophosphokinase of Hyphomonas neptunium (strain ATCC 15444).